Reading from the N-terminus, the 170-residue chain is Lipoprotein signal peptidase (170 aa).

3 helical membrane passes run 5-25 (IVGV…KAYA), 62-82 (SNLI…VLFV), and 89-111 (STIC…LRFG). Catalysis depends on residues aspartate 115 and aspartate 133. The chain crosses the membrane as a helical span at residues 126-146 (WPAFNFADVCVTCGVICFLCL).

It belongs to the peptidase A8 family.

It is found in the cell inner membrane. The catalysed reaction is Release of signal peptides from bacterial membrane prolipoproteins. Hydrolyzes -Xaa-Yaa-Zaa-|-(S,diacylglyceryl)Cys-, in which Xaa is hydrophobic (preferably Leu), and Yaa (Ala or Ser) and Zaa (Gly or Ala) have small, neutral side chains.. It functions in the pathway protein modification; lipoprotein biosynthesis (signal peptide cleavage). This protein specifically catalyzes the removal of signal peptides from prolipoproteins. The sequence is that of Lipoprotein signal peptidase from Anaplasma marginale (strain Florida).